Here is a 397-residue protein sequence, read N- to C-terminus: Serpin B10 (397 aa).

Residues C68 and C395 are joined by a disulfide bond. The short motif at 74 to 77 (KKRK) is the Nuclear localization signal element.

This sequence belongs to the serpin family. Ov-serpin subfamily. As to expression, expressed specifically in myeloid cells and the bone marrow.

The protein resides in the nucleus. Its subcellular location is the cytoplasm. Its function is as follows. Protease inhibitor that may play a role in the regulation of protease activities during hematopoiesis and apoptosis induced by TNF. May regulate protease activities in the cytoplasm and in the nucleus. In Homo sapiens (Human), this protein is Serpin B10 (SERPINB10).